Reading from the N-terminus, the 400-residue chain is Centrosomal protein CEP57L1 (400 aa).

S45 is subject to Phosphoserine. Coiled coils occupy residues 47-111 (NNQA…KKDI) and 138-213 (NVER…QDRA). 2 disordered regions span residues 222–261 (REPP…EPVS) and 314–400 (MESK…KWEQ). Polar residues predominate over residues 244-258 (RTTSQARANPQSSGE). A coiled-coil region spans residues 261–345 (SICDSLSELL…EKIENSRINE (85 aa)). Composition is skewed to basic and acidic residues over residues 314-342 (MESK…ENSR) and 391-400 (LRRDDIKWEQ).

It belongs to the translokin family.

The protein resides in the cytoplasm. It is found in the cytoskeleton. Its subcellular location is the microtubule organizing center. It localises to the centrosome. Its function is as follows. Centrosomal protein which may be required for microtubule attachment to centrosomes. The sequence is that of Centrosomal protein CEP57L1 (Cep57l1) from Mus musculus (Mouse).